Here is a 417-residue protein sequence, read N- to C-terminus: UDP-N-acetylglucosamine 1-carboxyvinyltransferase (417 aa).

A phosphoenolpyruvate-binding site is contributed by K22 to N23. R92 provides a ligand contact to UDP-N-acetyl-alpha-D-glucosamine. Residue C116 is the Proton donor of the active site. C116 is subject to 2-(S-cysteinyl)pyruvic acid O-phosphothioketal. 2 residues coordinate UDP-N-acetyl-alpha-D-glucosamine: D304 and I326.

The protein belongs to the EPSP synthase family. MurA subfamily.

Its subcellular location is the cytoplasm. It catalyses the reaction phosphoenolpyruvate + UDP-N-acetyl-alpha-D-glucosamine = UDP-N-acetyl-3-O-(1-carboxyvinyl)-alpha-D-glucosamine + phosphate. It participates in cell wall biogenesis; peptidoglycan biosynthesis. In terms of biological role, cell wall formation. Adds enolpyruvyl to UDP-N-acetylglucosamine. The sequence is that of UDP-N-acetylglucosamine 1-carboxyvinyltransferase from Desulforapulum autotrophicum (strain ATCC 43914 / DSM 3382 / VKM B-1955 / HRM2) (Desulfobacterium autotrophicum).